Here is a 398-residue protein sequence, read N- to C-terminus: Chalcone synthase 1 (398 aa).

The active site involves C167.

Belongs to the thiolase-like superfamily. Chalcone/stilbene synthases family.

The catalysed reaction is (E)-4-coumaroyl-CoA + 3 malonyl-CoA + 3 H(+) = 2',4,4',6'-tetrahydroxychalcone + 3 CO2 + 4 CoA. It functions in the pathway secondary metabolite biosynthesis; flavonoid biosynthesis. Functionally, the primary product of this enzyme is 4,2',4',6'-tetrahydroxychalcone (also termed naringenin-chalcone or chalcone) which can under specific conditions spontaneously isomerize into naringenin. The protein is Chalcone synthase 1 (CHS1) of Gerbera hybrida (Daisy).